Consider the following 241-residue polypeptide: Zinc finger CCHC domain-containing protein 24 (241 aa).

Serine 65 and serine 93 each carry phosphoserine. The CCHC-type zinc finger occupies 132 to 149 (YLCHLCFNKGHYIKDCPQ).

The sequence is that of Zinc finger CCHC domain-containing protein 24 (ZCCHC24) from Homo sapiens (Human).